The following is a 469-amino-acid chain: Ribulose bisphosphate carboxylase large chain (469 aa).

A propeptide spanning residues M1–S2 is cleaved from the precursor. Residue P3 is modified to N-acetylproline. At K14 the chain carries N6,N6,N6-trimethyllysine. 2 residues coordinate substrate: N123 and T173. K175 acts as the Proton acceptor in catalysis. K177 contacts substrate. Mg(2+) is bound by residues K201, D203, and E204. K201 carries the N6-carboxylysine modification. Residue H294 is the Proton acceptor of the active site. Substrate is bound by residues R295, H327, and S379.

Belongs to the RuBisCO large chain family. Type I subfamily. As to quaternary structure, heterohexadecamer of 8 large chains and 8 small chains; disulfide-linked. The disulfide link is formed within the large subunit homodimers. It depends on Mg(2+) as a cofactor. Post-translationally, the disulfide bond which can form in the large chain dimeric partners within the hexadecamer appears to be associated with oxidative stress and protein turnover.

Its subcellular location is the plastid. The protein resides in the chloroplast. It carries out the reaction 2 (2R)-3-phosphoglycerate + 2 H(+) = D-ribulose 1,5-bisphosphate + CO2 + H2O. It catalyses the reaction D-ribulose 1,5-bisphosphate + O2 = 2-phosphoglycolate + (2R)-3-phosphoglycerate + 2 H(+). RuBisCO catalyzes two reactions: the carboxylation of D-ribulose 1,5-bisphosphate, the primary event in carbon dioxide fixation, as well as the oxidative fragmentation of the pentose substrate in the photorespiration process. Both reactions occur simultaneously and in competition at the same active site. The chain is Ribulose bisphosphate carboxylase large chain from Iris ensata (Japanese iris).